The sequence spans 351 residues: DNA polymerase IV (351 aa).

Positions 4–185 constitute a UmuC domain; sequence IIHVDMDCFF…LPLAKIPGVG (182 aa). Mg(2+) is bound by residues Asp8 and Asp103. Glu104 is an active-site residue.

It belongs to the DNA polymerase type-Y family. As to quaternary structure, monomer. The cofactor is Mg(2+).

Its subcellular location is the cytoplasm. The enzyme catalyses DNA(n) + a 2'-deoxyribonucleoside 5'-triphosphate = DNA(n+1) + diphosphate. Poorly processive, error-prone DNA polymerase involved in untargeted mutagenesis. Copies undamaged DNA at stalled replication forks, which arise in vivo from mismatched or misaligned primer ends. These misaligned primers can be extended by PolIV. Exhibits no 3'-5' exonuclease (proofreading) activity. May be involved in translesional synthesis, in conjunction with the beta clamp from PolIII. This is DNA polymerase IV from Salmonella paratyphi B (strain ATCC BAA-1250 / SPB7).